The sequence spans 371 residues: uncharacterized protein (371 aa).

Residues 20 to 250 (VTIRNVTKRY…PANIFVAGFI (231 aa)) form the ABC transporter domain. An ATP-binding site is contributed by 52–59 (GPSGCGKS).

This sequence belongs to the ABC transporter superfamily.

The protein localises to the cell inner membrane. Functionally, probably part of a binding-protein-dependent transport system y4oPQRS. This system probably transports a sugar-like molecule. Probably responsible for energy coupling to the transport system. This is an uncharacterized protein from Sinorhizobium fredii (strain NBRC 101917 / NGR234).